Consider the following 220-residue polypeptide: RNLLSVAYKNVVGARRASWRIISSIEQKEESRGNEDHVSVIRDYRSRIEKELSDNCDGILKLLDTKLVPAASSGDSKVFYLKMKGDYHRYLAEFKTGAQRKEAAESTLTAYKAAQDIANAELAPTHPIRLGLALNFSVFYYEILNSPDRACNLAKQAFVEAIAELDTLGEDSYKDSTLIMQLLRDNLTLWTSDMQDEAADEITEEAAKQQKAVNNNKIAY.

Belongs to the 14-3-3 family.

This chain is 14-3-3-like protein, found in Spinacia oleracea (Spinach).